Consider the following 577-residue polypeptide: MKVAVIGGGPSGLVTLKYLLAAHHFQPVDPIEVQLFESEDRVGGTFSYRTYDRAELVSSAQLTTFSDYRWHDKSVDYLSAVEYVEYLEGYCDRFGLRPHIRLSTQVEKVERTGKGKHRITVSHKGQTSTWDCDAVAVCSGLHVKPNIPSIPGLDRVPVVFHSSEYKHVRQLGQNTNVMVLGTGETGMDIAYFSVTADSTKSTTVCHRNGFVIGPKRLPETKLFGRVTSKTPGKALPVDLSRPYLFVNSYVHRKVRGALQTTLSRWAVKAGSWLVTGTTRGFDQWVGSLPKDKYDESHYFYCKSTKAMPYISAPYRSHSWVHRLRSSIVQAVLPDTGSRKIDLAPWPEYIDEDGVVHFEKNSRPDSKVLLQERRFKPDVLVLATGYTQSFPFLGSEYCTPDQADQRGIWRTGDASVGYIGFVRPSFGAIPPLAEMQVQVWVLNLINRLPGPLVADDSYRLFSNPSGRIEYGVDHDMFAHRLALDIGSAPSFFQALAHGWQVIVFWAMGGTLNTKFRLVGPWAWSGAPRIIHDELLDTVTGRRSTIDLLVALCIRIFQATSVVSSRPSKGDSEVTENRG.

Belongs to the FMO family. FAD is required as a cofactor.

The protein operates within secondary metabolite biosynthesis. Functionally, monooxygenase; part of the gene cluster that mediates the biosynthesis of the indole diterpenes penitrems. The geranylgeranyl diphosphate (GGPP) synthase penG catalyzes the first step in penitrem biosynthesis via conversion of farnesyl pyrophosphate and isopentyl pyrophosphate into geranylgeranyl pyrophosphate (GGPP). Condensation of indole-3-glycerol phosphate with GGPP by the prenyl transferase penC then forms 3-geranylgeranylindole (3-GGI). Epoxidation by the FAD-dependent monooxygenase penM leads to a epoxidized-GGI that is substrate of the terpene cyclase penB for cyclization to yield paspaline. Paspaline is subsequently converted to 13-desoxypaxilline by the cytochrome P450 monooxygenase penP, the latter being then converted to paxilline by the cytochrome P450 monooxygenase penQ. Paxilline is converted to beta-paxitriol via C-10 ketoreduction by the short-chain dehydrogenase PC-15 which can be monoprenylated at the C-20 by the indole diterpene prenyltransferase penD. A two-step elimination (acetylation and elimination) process performed by the O-acetyltransferase PC-16 and the P.simplicissimum ptmI-ortholog not yet identified in P.crustosum, leads to the production of the prenylated form of penijanthine. The FAD-linked oxidoreductase ptmO then converts the prenylated form of penijanthine into PC-M5 which is in turn transformed into PC-M4 by the aromatic dimethylallyltransferase PC-22. A series of oxidation steps involving 4 cytochrome P450 monooxygenases (PC-21, PC-05, PC-23, PC-20) and a FAD-dependent monooxygenase (PC-14) are required for the transformation of PC-M4 to penitrems A and E. Synthesis of these final products is proposed to proceed via penitrems D and C (PC-21, PC-05, PC-14) and penitrems B and F (PC-21, PC-05, PC-14, PC-23). The sequence is that of Monooxygenase PC-14 from Penicillium crustosum (Blue mold fungus).